The sequence spans 980 residues: Exportin-T (980 aa).

It belongs to the exportin family. In terms of tissue distribution, expressed in roots, stems, leaves, flowers and embryos.

It localises to the nucleus. The protein localises to the cytoplasm. In terms of biological role, probable tRNA nucleus export receptor which regulates tRNA processing and facilitates tRNA translocation across the nuclear pore complex. Is required for correct leaf initiation at different developmental stages and may play a role in floral patterning. The protein is Exportin-T of Oryza sativa subsp. japonica (Rice).